Consider the following 707-residue polypeptide: Polyribonucleotide nucleotidyltransferase (707 aa).

2 residues coordinate Mg(2+): D486 and D492. A KH domain is found at 553–612; sequence PTVTTLRVLPDKIPIIIGPAGKNIKKIIEETKVKIDLDPEGLVKIYATSKEAAEKAVSMI. The region spanning 622-690 is the S1 motif domain; it reads GEVYMGKVTR…DQGRIKVSLK (69 aa).

Belongs to the polyribonucleotide nucleotidyltransferase family. Mg(2+) is required as a cofactor.

The protein localises to the cytoplasm. It catalyses the reaction RNA(n+1) + phosphate = RNA(n) + a ribonucleoside 5'-diphosphate. In terms of biological role, involved in mRNA degradation. Catalyzes the phosphorolysis of single-stranded polyribonucleotides processively in the 3'- to 5'-direction. The protein is Polyribonucleotide nucleotidyltransferase of Sulfurihydrogenibium azorense (strain DSM 15241 / OCM 825 / Az-Fu1).